An 82-amino-acid chain; its full sequence is uncharacterized protein (82 aa).

Transmembrane regions (helical) follow at residues 4–26, 31–50, and 55–77; these read IAVL…AGHF, FWVA…VTLA, and SFIF…TLFL.

The protein resides in the cell membrane. This is an uncharacterized protein from Bacillus subtilis (strain 168).